We begin with the raw amino-acid sequence, 510 residues long: Protein disulfide-isomerase (510 aa).

The first 19 residues, 1–19, serve as a signal peptide directing secretion; sequence MLRRALLCLAVAAAPGLYA. Residues 20–136 enclose the Thioredoxin 1 domain; that stretch reads DAPEEEDHVL…IVNWLKKRTG (117 aa). Residues C55 and C58 each act as nucleophile in the active site. An intrachain disulfide couples C55 to C58. An N6-acetyllysine modification is found at K202. 2 positions are modified to N6-succinyllysine: K224 and K273. Phosphoserine is present on residues S333 and S359. The 127-residue stretch at 351–477 folds into the Thioredoxin 2 domain; the sequence is GKIKPHLMSQ…FKKFLESGGQ (127 aa). Active-site nucleophile residues include C399 and C402. Residues C399 and C402 are joined by a disulfide bond. S429 carries the post-translational modification Phosphoserine. The tract at residues 473 to 510 is disordered; sequence ESGGQDGAGDDDDLEDLEEAEEPDMEEDDDQKAVKDEL. The span at 480–502 shows a compositional bias: acidic residues; the sequence is AGDDDDLEDLEEAEEPDMEEDDD. The Prevents secretion from ER motif lies at 507-510; that stretch reads KDEL.

Belongs to the protein disulfide isomerase family. In terms of assembly, heterodimer; heterodimerizes with the protein microsomal triglyceride transfer MTTP. Homodimer. Homodimer. Monomers and homotetramers may also occur. Interacts with P4HA2, forming a heterotetramer consisting of 2 alpha subunits (P4HA2) and 2 beta (P4HB), where P4HB plays the role of a structural subunit; this tetramer catalyzes the formation of 4-hydroxyproline in collagen. Also constitutes the structural subunit of the microsomal triacylglycerol transfer protein MTTP in mammalian cells. Stabilizes both enzymes and retain them in the ER without contributing to the catalytic activity. Binds UBQLN1. Interacts with ERO1B. Interacts with ILDR2. Interacts with ERN1/IRE1A (via N-terminus); the interaction is enhanced by phosphorylation of P4HB by FAM20C in response to endoplasmic reticulum stress and results in attenuation of ERN1 activity. Phosphorylation of Ser-359 by FAM20C is induced by endoplasmic reticulum stress and results in a functional switch from oxidoreductase to molecular chaperone. It also promotes interaction with ERN1.

The protein resides in the endoplasmic reticulum. Its subcellular location is the endoplasmic reticulum lumen. It is found in the melanosome. The protein localises to the cell membrane. It carries out the reaction Catalyzes the rearrangement of -S-S- bonds in proteins.. Functionally, this multifunctional protein catalyzes the formation, breakage and rearrangement of disulfide bonds. At the cell surface, seems to act as a reductase that cleaves disulfide bonds of proteins attached to the cell. May therefore cause structural modifications of exofacial proteins. Inside the cell, seems to form/rearrange disulfide bonds of nascent proteins. At high concentrations and following phosphorylation by FAM20C, functions as a chaperone that inhibits aggregation of misfolded proteins. At low concentrations, facilitates aggregation (anti-chaperone activity). May be involved with other chaperones in the structural modification of the TG precursor in hormone biogenesis. Also acts as a structural subunit of various enzymes such as prolyl 4-hydroxylase and microsomal triacylglycerol transfer protein MTTP. Receptor for LGALS9; the interaction retains P4HB at the cell surface of Th2 T helper cells, increasing disulfide reductase activity at the plasma membrane, altering the plasma membrane redox state and enhancing cell migration. This is Protein disulfide-isomerase (P4HB) from Macaca fuscata fuscata (Japanese macaque).